The sequence spans 447 residues: Na(+)-translocating NADH-quinone reductase subunit A (447 aa).

It belongs to the NqrA family. As to quaternary structure, composed of six subunits; NqrA, NqrB, NqrC, NqrD, NqrE and NqrF.

It carries out the reaction a ubiquinone + n Na(+)(in) + NADH + H(+) = a ubiquinol + n Na(+)(out) + NAD(+). Functionally, NQR complex catalyzes the reduction of ubiquinone-1 to ubiquinol by two successive reactions, coupled with the transport of Na(+) ions from the cytoplasm to the periplasm. NqrA to NqrE are probably involved in the second step, the conversion of ubisemiquinone to ubiquinol. In Neisseria meningitidis serogroup C / serotype 2a (strain ATCC 700532 / DSM 15464 / FAM18), this protein is Na(+)-translocating NADH-quinone reductase subunit A.